Consider the following 670-residue polypeptide: E3 ubiquitin-protein ligase MAG2 (670 aa).

Disordered regions lie at residues 1–84 (MVEP…TSTR) and 124–145 (EVEREKSRSSSSKKSNRRRDEH). Residues 20 to 39 (DTLNATSNSSKQGVSNNKRN) show a composition bias toward polar residues. The segment covering 51-66 (SDGRDNAHNYHGEGRR) has biased composition (basic and acidic residues). Residues 195-250 (CSICLSEEPVAPRMVTCGHIFCLSCLLNFFSIEETVKNKETGYSKKKKYKECPLCG) form an RING-type zinc finger. The segment at 609-670 (TEDEKASKEN…LFSSNHQALG (62 aa)) is disordered. Positions 610-622 (EDEKASKENKEFQ) are enriched in basic and acidic residues. The segment covering 637–649 (VTDSTDSPPTSNG) has biased composition (low complexity).

It belongs to the RNF10 family.

It is found in the cytoplasm. The catalysed reaction is S-ubiquitinyl-[E2 ubiquitin-conjugating enzyme]-L-cysteine + [acceptor protein]-L-lysine = [E2 ubiquitin-conjugating enzyme]-L-cysteine + N(6)-ubiquitinyl-[acceptor protein]-L-lysine.. It functions in the pathway protein modification; protein ubiquitination. Its function is as follows. E3 ubiquitin-protein ligase involved in the degradation of non-functional 18S rRNAs in response to stalled ribosomes. Catalyzes monoubiquitination of RPS3/uS3 in response to stalled ribosomes, initiating a HEL2-dependent response that activates the degradation of non-functional 18S rRNAs. This is E3 ubiquitin-protein ligase MAG2 from Saccharomyces cerevisiae (strain ATCC 204508 / S288c) (Baker's yeast).